The chain runs to 274 residues: Cell division protein FtsQ (274 aa).

A disordered region spans residues 1-24; the sequence is MRDLHAKKQRVPHNRVKKPPKERK. Over 1–33 the chain is Cytoplasmic; it reads MRDLHAKKQRVPHNRVKKPPKERKPINWGPILK. Residues 7–21 are compositionally biased toward basic residues; that stretch reads KKQRVPHNRVKKPPK. The chain crosses the membrane as a helical span at residues 34–56; sequence FASRGFGGAALCAGLGFGGWQLY. The Periplasmic portion of the chain corresponds to 57 to 274; it reads NLVSRTTLLR…YADKIIVKKV (218 aa). Residues 65 to 133 form the POTRA domain; it reads LRLEAIEVSP…HTLSITVSER (69 aa).

Belongs to the FtsQ/DivIB family. FtsQ subfamily.

It localises to the cell inner membrane. In terms of biological role, essential cell division protein. The sequence is that of Cell division protein FtsQ from Geobacter sp. (strain M21).